The sequence spans 761 residues: 1,2-alpha-glucosylglycerol phosphorylase (761 aa).

327–328 (YQ) provides a ligand contact to glycerol. 333–334 (WD) lines the substrate pocket. Glu475 acts as the Proton donor in catalysis. Residue 587 to 588 (KQ) coordinates substrate.

The protein belongs to the glycosyl hydrolase 65 family. Homodimer.

It catalyses the reaction 2-O-(alpha-D-glucopyranosyl)glycerol + phosphate = beta-D-glucose 1-phosphate + glycerol. Functionally, catalyzes both the (1) reversible phosphorolysis of 2-O-alpha-D-glucopyranosyl-sn-glycerol (GG) from beta-D-glucose 1-phosphate (betaGlc1P) and glycerol and (2) the hydrolysis of betaGlc1P. the betaGlc1P hydrolysis is a glucosyl-transfer reaction to an acceptor water molecule that produces an anomer-inverted alpha-glucose, not a phosphatase-type reaction. In the absence of glycerol produces alpha-D-glucopyranose and phosphate from beta-D-glucopyranose 1-phosphate. The chain is 1,2-alpha-glucosylglycerol phosphorylase from Bacillus selenitireducens (strain ATCC 700615 / DSM 15326 / MLS10).